We begin with the raw amino-acid sequence, 362 residues long: MSQNSLRLVEDKSVDKSKALEAALSQIERSFGKGSIMKLGSNENVIEIETISTGSLGLDIALGVGGLPKGRIIEIYGPESSGKTTLALQTIAESQKKGGICAFVDAEHALDPVYARKLGVDLQNLLISQPDTGEQALEITDTLVRSGAVDVLVVDSVAALTPRAEIEGEMGDSLPGLQARLMSQALRKLTASISKSNTMVIFINQIRMKIGVMFGSPETTTGGNALKFYASVRLDIRRIGSVKEREEVIGNQTRVKVVKNKMAPPFKQVEFDIMYGEGVSKTGELVDLGVKAGIVEKSGAWFSYNSQRLGQGRENAKTFLRDNPDLAREIELALRQNAGLIADRFLQNGGPDADDGDAAADM.

Position 77–84 (77–84 (GPESSGKT)) interacts with ATP.

Belongs to the RecA family.

The protein resides in the cytoplasm. Functionally, can catalyze the hydrolysis of ATP in the presence of single-stranded DNA, the ATP-dependent uptake of single-stranded DNA by duplex DNA, and the ATP-dependent hybridization of homologous single-stranded DNAs. It interacts with LexA causing its activation and leading to its autocatalytic cleavage. The sequence is that of Protein RecA from Rhizobium etli (strain CIAT 652).